We begin with the raw amino-acid sequence, 427 residues long: Endothelin-1 receptor (427 aa).

An N-terminal signal peptide occupies residues 1-20; the sequence is MSIFCLAAYFWLTMVGGVMA. The Extracellular portion of the chain corresponds to 21-80; sequence DNPERYSANLSSHMEDFTPFPGTEINFLGTTHRPPNLALPSNGSMHGYCPQQTKITTAFK. Asn29 and Asn62 each carry an N-linked (GlcNAc...) asparagine glycan. The chain crosses the membrane as a helical span at residues 81-102; it reads YINTVISCTIFIVGMVGNATLL. The Cytoplasmic segment spans residues 103–112; the sequence is RIIYQNKCMR. Residues 113–132 traverse the membrane as a helical segment; it reads NGPNALIASLALGDLIYVVI. Residues 133-159 are Extracellular-facing; it reads DLPINVFKLLAGRWPFDHNDFGVFLCK. An intrachain disulfide couples Cys158 to Cys239. A helical transmembrane segment spans residues 160–181; that stretch reads LFPFLQKSSVGITVLNLCALSV. The Cytoplasmic segment spans residues 182–205; the sequence is DRYRAVASWSRVQGIGIPLITAIE. Residues 206–229 form a helical membrane-spanning segment; that stretch reads IVSIWILSFILAIPEAIGFVMVPF. At 230–256 the chain is on the extracellular side; it reads EYKGELHRTCMLNATSKFMEFYQDVKD. A glycan (N-linked (GlcNAc...) asparagine) is linked at Asn242. Residues 257-278 form a helical membrane-spanning segment; the sequence is WWLFGFYFCMPLVCTAIFYTLM. Over 279-306 the chain is Cytoplasmic; that stretch reads TCEMLNRRNGSLRIALSEHLKQRREVAK. A helical transmembrane segment spans residues 307 to 328; that stretch reads TVFCLVVIFALCWFPLHLSRIL. The Extracellular portion of the chain corresponds to 329 to 347; the sequence is KKTVYDEMDKNRCELLSFL. A helical membrane pass occupies residues 348-372; it reads LLMDYIGINLATMNSCINPIALYFV. Over 373-427 the chain is Cytoplasmic; that stretch reads SKKFKNCFQSCLCCCCHQSKSLMTSVPMNGTSIQWKNQEQNNHNTERSSHKDSMN. The tract at residues 408 to 427 is disordered; that stretch reads KNQEQNNHNTERSSHKDSMN. Residues 416 to 427 show a composition bias toward basic and acidic residues; that stretch reads NTERSSHKDSMN. Ser425 bears the Phosphoserine mark.

This sequence belongs to the G-protein coupled receptor 1 family. Endothelin receptor subfamily. EDNRA sub-subfamily. Interacts with HDAC7 and KAT5.

It localises to the cell membrane. Receptor for endothelin-1. Mediates its action by association with G proteins that activate a phosphatidylinositol-calcium second messenger system. The rank order of binding affinities for ET-A is: ET1 &gt; ET2 &gt;&gt; ET3. The polypeptide is Endothelin-1 receptor (Mus musculus (Mouse)).